The primary structure comprises 220 residues: 1-Cys peroxiredoxin B (220 aa).

Residues leucine 4 to threonine 165 form the Thioredoxin domain. Cysteine 46 acts as the Cysteine sulfenic acid (-SOH) intermediate in catalysis. Positions lysine 195–glutamine 218 match the Bipartite nuclear localization signal motif.

It belongs to the peroxiredoxin family. Prx6 subfamily.

The protein resides in the nucleus. It localises to the cytoplasm. It catalyses the reaction a hydroperoxide + [thioredoxin]-dithiol = an alcohol + [thioredoxin]-disulfide + H2O. Thiol-specific peroxidase that catalyzes the reduction of hydrogen peroxide and organic hydroperoxides to water and alcohols, respectively. Seems to contribute to the inhibition of germination during stress. The protein is 1-Cys peroxiredoxin B of Oryza sativa subsp. indica (Rice).